The primary structure comprises 267 residues: NADP-dependent mannitol dehydrogenase (267 aa).

Residues Asn-108 and Lys-141 each coordinate NADP(+). Ser-160 (proton donor) is an active-site residue. Tyr-175, Lys-179, Ile-207, and Thr-209 together coordinate NADP(+). Tyr-175 functions as the Proton acceptor in the catalytic mechanism. The active-site Lowers pKa of active site Tyr is the Lys-179.

This sequence belongs to the short-chain dehydrogenases/reductases (SDR) family. As to quaternary structure, exists as monomer, dimer and tetramer.

It catalyses the reaction D-mannitol + NADP(+) = D-fructose + NADPH + H(+). Its function is as follows. Interconverts D-mannitol and D-fructose. Not active with fructose 6-phosphate or NADH. The sequence is that of NADP-dependent mannitol dehydrogenase from Davidiella tassiana (Mycosphaerella tassiana).